A 460-amino-acid polypeptide reads, in one-letter code: Cysteine--tRNA ligase (460 aa).

Residue C29 participates in Zn(2+) binding. The 'HIGH' region signature appears at 31-41 (ATPQSSPHIGH). The Zn(2+) site is built by C212, H237, and E241. The short motif at 268 to 272 (KMSKS) is the 'KMSKS' region element. Residue K271 participates in ATP binding.

It belongs to the class-I aminoacyl-tRNA synthetase family. Monomer. The cofactor is Zn(2+).

The protein resides in the cytoplasm. It carries out the reaction tRNA(Cys) + L-cysteine + ATP = L-cysteinyl-tRNA(Cys) + AMP + diphosphate. The chain is Cysteine--tRNA ligase from Corynebacterium glutamicum (strain R).